The chain runs to 398 residues: Phosphoglycerate kinase (398 aa).

Residues 23–25, Arg38, 61–64, Arg119, and Arg152 contribute to the substrate site; these read DLN and HFGR. ATP is bound by residues Lys202, Glu324, and 354–357; that span reads GGDT.

The protein belongs to the phosphoglycerate kinase family. Monomer.

It localises to the cytoplasm. The catalysed reaction is (2R)-3-phosphoglycerate + ATP = (2R)-3-phospho-glyceroyl phosphate + ADP. It participates in carbohydrate degradation; glycolysis; pyruvate from D-glyceraldehyde 3-phosphate: step 2/5. The protein is Phosphoglycerate kinase of Rhodopseudomonas palustris (strain ATCC BAA-98 / CGA009).